The primary structure comprises 768 residues: C-type polyheme cytochrome OmcC (768 aa).

The signal sequence occupies residues 1 to 23 (MSRKVTKYSAVLAVSLFAAALAG). The N-palmitoyl cysteine moiety is linked to residue Cys-24. A lipid anchor (S-diacylglycerol cysteine) is attached at Cys-24. 36 residues coordinate heme c: Cys-48, Cys-51, His-52, Cys-80, Cys-83, His-84, Cys-112, Cys-115, His-116, Cys-148, Cys-151, His-152, Cys-193, Cys-196, His-197, Cys-238, Cys-241, His-242, Cys-320, Cys-323, His-324, Cys-405, Cys-408, His-409, Cys-454, Cys-457, His-458, Cys-504, Cys-507, His-508, Cys-579, Cys-582, His-583, Cys-611, Cys-614, and His-615.

Binds 12 heme c groups per subunit.

It localises to the cell outer membrane. In terms of biological role, not involved in Fe(3+) reduction. The chain is C-type polyheme cytochrome OmcC (omcC) from Geobacter sulfurreducens (strain ATCC 51573 / DSM 12127 / PCA).